The primary structure comprises 268 residues: Secreted RxLR effector protein 5 (268 aa).

Positions 1 to 21 (MRGAFYMAITLFLARSRSATA) are cleaved as a signal peptide. A RxLR-dEER motif is present at residues 48–63 (RYLRDGLALSAANEER). Asparagine 104 carries an N-linked (GlcNAc...) asparagine glycan.

This sequence belongs to the RxLR effector family.

Its subcellular location is the secreted. The protein resides in the host nucleus. Functionally, effector that acts as a broad suppressor of cell death to interrupt plant immunity. Inhibits cell death induced by cell death-inducing proteins, including the PAMP elicitor INF1 from P.infestans. The chain is Secreted RxLR effector protein 5 from Plasmopara viticola (Downy mildew of grapevine).